The following is a 163-amino-acid chain: 2-amino-4-hydroxy-6-hydroxymethyldihydropteridine pyrophosphokinase (163 aa).

This sequence belongs to the HPPK family.

It catalyses the reaction 6-hydroxymethyl-7,8-dihydropterin + ATP = (7,8-dihydropterin-6-yl)methyl diphosphate + AMP + H(+). It functions in the pathway cofactor biosynthesis; tetrahydrofolate biosynthesis; 2-amino-4-hydroxy-6-hydroxymethyl-7,8-dihydropteridine diphosphate from 7,8-dihydroneopterin triphosphate: step 4/4. In terms of biological role, catalyzes the transfer of pyrophosphate from adenosine triphosphate (ATP) to 6-hydroxymethyl-7,8-dihydropterin, an enzymatic step in folate biosynthesis pathway. This is 2-amino-4-hydroxy-6-hydroxymethyldihydropteridine pyrophosphokinase (folK) from Helicobacter pylori (strain ATCC 700392 / 26695) (Campylobacter pylori).